We begin with the raw amino-acid sequence, 300 residues long: Manganese-binding lipoprotein MntA (300 aa).

Residues 1-19 (MKKVCFSFVIMVIALIAAG) form the signal peptide. Cys-20 carries the N-palmitoyl cysteine lipid modification. Cys-20 carries S-diacylglycerol cysteine lipidation. Mn(2+) contacts are provided by His-68, His-130, Glu-196, and Asp-271.

The protein belongs to the bacterial solute-binding protein 9 family.

The protein resides in the cell membrane. In terms of biological role, probably part of ATP-binding cassette (ABC) transport system MntABCD involved in manganese import. Binds manganese and delivers it to the membrane permease for translocation into the cytoplasm. The polypeptide is Manganese-binding lipoprotein MntA (mntA) (Halalkalibacterium halodurans (strain ATCC BAA-125 / DSM 18197 / FERM 7344 / JCM 9153 / C-125) (Bacillus halodurans)).